Reading from the N-terminus, the 100-residue chain is MNLSPREKDKLLISMAAIVARRRLDRGVKLNHPEAIAIISDFILEGARDGRTVAELMQSGAQVLTRDQVMPGIPEMIHDIQVEATFPDGTKLVTVHEPIR.

The protein belongs to the urease gamma subunit family. Heterotrimer of UreA (gamma), UreB (beta) and UreC (alpha) subunits. Three heterotrimers associate to form the active enzyme.

Its subcellular location is the cytoplasm. The enzyme catalyses urea + 2 H2O + H(+) = hydrogencarbonate + 2 NH4(+). It participates in nitrogen metabolism; urea degradation; CO(2) and NH(3) from urea (urease route): step 1/1. In Bradyrhizobium diazoefficiens (strain JCM 10833 / BCRC 13528 / IAM 13628 / NBRC 14792 / USDA 110), this protein is Urease subunit gamma.